The primary structure comprises 396 residues: Probable glucan endo-1,6-beta-glucosidase B (396 aa).

An N-terminal signal peptide occupies residues 1–17 (MIRRLAAFSALSGLATA). N-linked (GlcNAc...) asparagine glycosylation occurs at Asn30. The active-site Proton donor is the Glu219. Residue Asn272 is glycosylated (N-linked (GlcNAc...) asparagine). Glu320 (nucleophile) is an active-site residue.

Belongs to the glycosyl hydrolase 5 (cellulase A) family.

The protein resides in the secreted. The catalysed reaction is Random hydrolysis of (1-&gt;6)-linkages in (1-&gt;6)-beta-D-glucans.. In terms of biological role, beta-glucanases participate in the metabolism of beta-glucan, the main structural component of the cell wall. Acts on lutean, pustulan and 1,6-oligo-beta-D-glucosides. The protein is Probable glucan endo-1,6-beta-glucosidase B (exgB) of Aspergillus fumigatus (strain CBS 144.89 / FGSC A1163 / CEA10) (Neosartorya fumigata).